A 21-amino-acid polypeptide reads, in one-letter code: Testis ecdysiotropin peptide 1 (21 aa).

The interval 1 to 21 is disordered; sequence ISDFDEYEPLNDADNNEVLDF.

Its function is as follows. Start or boost ecdysteroid synthesis in testis of larvae and pupae. In Lymantria dispar (Gypsy moth), this protein is Testis ecdysiotropin peptide 1.